The primary structure comprises 70 residues: Deleted in esophageal cancer 1 (70 aa).

Expressed in many tissues, with highest expression in prostate and testis. Reduced expression in esophageal carcinomas.

Its function is as follows. Candidate tumor suppressor. The polypeptide is Deleted in esophageal cancer 1 (Homo sapiens (Human)).